We begin with the raw amino-acid sequence, 763 residues long: Long-chain-fatty-acid--CoA ligase ACSBG2 (763 aa).

Residues cysteine 47 to tryptophan 78 are disordered. A compositionally biased stretch (basic and acidic residues) spans proline 51–glutamine 61. Over residues methionine 62 to tryptophan 78 the composition is skewed to polar residues. ATP is bound by residues threonine 281 to lysine 289, glutamate 472 to serine 477, aspartate 550, arginine 565, and lysine 678.

It belongs to the ATP-dependent AMP-binding enzyme family. Bubblegum subfamily.

The protein localises to the cytoplasm. The enzyme catalyses a long-chain fatty acid + ATP + CoA = a long-chain fatty acyl-CoA + AMP + diphosphate. It carries out the reaction (5Z,8Z,11Z,14Z)-eicosatetraenoate + ATP + CoA = (5Z,8Z,11Z,14Z)-eicosatetraenoyl-CoA + AMP + diphosphate. It catalyses the reaction hexadecanoate + ATP + CoA = hexadecanoyl-CoA + AMP + diphosphate. The catalysed reaction is (9Z)-octadecenoate + ATP + CoA = (9Z)-octadecenoyl-CoA + AMP + diphosphate. The enzyme catalyses (9Z,12Z)-octadecadienoate + ATP + CoA = (9Z,12Z)-octadecadienoyl-CoA + AMP + diphosphate. It carries out the reaction tetracosanoate + ATP + CoA = tetracosanoyl-CoA + AMP + diphosphate. Functionally, mediates activation of long-chain fatty acids for both synthesis of cellular lipids, and degradation via beta-oxidation. Its function is as follows. Catalyzes the conversion of fatty acids such as long chain and very long-chain fatty acids to their active form acyl-CoAs for both synthesis of cellular lipids, and degradation via beta-oxidation. Can activate diverse saturated, monosaturated and polyunsaturated fatty acids. This chain is Long-chain-fatty-acid--CoA ligase ACSBG2, found in Gallus gallus (Chicken).